A 117-amino-acid polypeptide reads, in one-letter code: MSPRKTYILKLYVAGNTPNSMRALTTLREILQTDFKGVYALKVIDVLKNPQLAEEDKILATPTLAKILPPPVRRIIGDLSDRERVLIGLDLLFEELSESDFFSGSPDSEFSSDEGKS.

The protein belongs to the KaiB family. As to quaternary structure, may undergo a major conformational rearrangment; in the free state forms homooligomers. When bound to KaiC switches to a monomeric thioredoxin-fold (KaiB(fs)). The active oscillator complex is probably KaiC(6):KaiB(6).

In terms of biological role, component of the KaiBC clock protein complex, which constitutes the main circadian regulator in cyanobacteria; it may modify the ATPase activity of KaiC. May be a metamorphic protein which reversibly switches between an inactive tetrameric fold and a rare, thioredoxin-like monomeric fold (KaiB(fs)). KaiB(fs) binds phospho-KaiC, and perhaps clock output effectors. The polypeptide is Circadian clock oscillator protein KaiB (Prochlorococcus marinus (strain SARG / CCMP1375 / SS120)).